The chain runs to 406 residues: Phosphatidylserine decarboxylase proenzyme, mitochondrial (406 aa).

Residues 1–49 (MAVAGGRGCVRSLREGVLWRSSPCHCDYTATRHFLGALQKLPLQAWVRK) constitute a mitochondrion transit peptide. Residues 50 to 60 (VHTAPLRTLFL) lie on the Mitochondrial matrix side of the membrane. The chain crosses the membrane as a helical span at residues 61 to 79 (LRPVPILLAAGGGYAGYRQ). Residues 80–406 (YEKYRERQLE…ILFGEALGSL (327 aa)) lie on the Mitochondrial intermembrane side of the membrane. Residues D188, H264, and S375 each act as charge relay system; for autoendoproteolytic cleavage activity in the active site. S375 acts as the Schiff-base intermediate with substrate; via pyruvic acid; for decarboxylase activity in catalysis. S375 bears the Pyruvic acid (Ser); by autocatalysis mark.

This sequence belongs to the phosphatidylserine decarboxylase family. PSD-B subfamily. Eukaryotic type I sub-subfamily. Heterodimer of a large membrane-associated beta subunit and a small pyruvoyl-containing alpha subunit. The cofactor is pyruvate. Is synthesized initially as an inactive proenzyme. Formation of the active enzyme involves a self-maturation process in which the active site pyruvoyl group is generated from an internal serine residue via an autocatalytic post-translational modification. Two non-identical subunits are generated from the proenzyme in this reaction, and the pyruvate is formed at the N-terminus of the alpha chain, which is derived from the carboxyl end of the proenzyme. The autoendoproteolytic cleavage occurs by a canonical serine protease mechanism, in which the side chain hydroxyl group of the serine supplies its oxygen atom to form the C-terminus of the beta chain, while the remainder of the serine residue undergoes an oxidative deamination to produce ammonia and the pyruvoyl prosthetic group on the alpha chain. During this reaction, the Ser that is part of the protease active site of the proenzyme becomes the pyruvoyl prosthetic group, which constitutes an essential element of the active site of the mature decarboxylase.

Its subcellular location is the mitochondrion inner membrane. The protein localises to the cytoplasm. The protein resides in the lipid droplet. The enzyme catalyses a 1,2-diacyl-sn-glycero-3-phospho-L-serine + H(+) = a 1,2-diacyl-sn-glycero-3-phosphoethanolamine + CO2. Its pathway is phospholipid metabolism; phosphatidylethanolamine biosynthesis. Inhibited by hydroxylamine. Functionally, catalyzes the formation of phosphatidylethanolamine (PtdEtn) from phosphatidylserine (PtdSer). Plays a central role in phospholipid metabolism and in the interorganelle trafficking of phosphatidylserine. May be involved in lipid droplet biogenesis at the endoplasmic reticulum membrane. This Rattus norvegicus (Rat) protein is Phosphatidylserine decarboxylase proenzyme, mitochondrial.